Reading from the N-terminus, the 101-residue chain is Small ribosomal subunit protein uS14 (101 aa).

Belongs to the universal ribosomal protein uS14 family. Part of the 30S ribosomal subunit. Contacts proteins S3 and S10.

Its function is as follows. Binds 16S rRNA, required for the assembly of 30S particles and may also be responsible for determining the conformation of the 16S rRNA at the A site. The protein is Small ribosomal subunit protein uS14 of Methylorubrum extorquens (strain PA1) (Methylobacterium extorquens).